Here is a 141-residue protein sequence, read N- to C-terminus: Small ribosomal subunit protein bS6 (141 aa).

Positions 97 to 141 (TGQSEMLKAEENRSERRERRDRPEHADSADGDDSDNSDASDNADE) are disordered. Over residues 103-124 (LKAEENRSERRERRDRPEHADS) the composition is skewed to basic and acidic residues. The segment covering 125-141 (ADGDDSDNSDASDNADE) has biased composition (acidic residues).

It belongs to the bacterial ribosomal protein bS6 family.

Functionally, binds together with bS18 to 16S ribosomal RNA. The protein is Small ribosomal subunit protein bS6 of Pseudomonas fluorescens (strain ATCC BAA-477 / NRRL B-23932 / Pf-5).